Reading from the N-terminus, the 159-residue chain is MAKEQGTKPIAQNKKARHDYAIEDKYEAGLVLTGTEVKSLREGRASLAESFITIDRRGEMWLEGANIPEYLNGTWNNHAPKRKRKLLLHAAQIDKLARQTQAKGFTIIPLSLYFKDGRVKVEIALARGKKEFDKRQSLREEQDKREALRAMRYANKQVR.

This sequence belongs to the SmpB family.

The protein localises to the cytoplasm. Functionally, required for rescue of stalled ribosomes mediated by trans-translation. Binds to transfer-messenger RNA (tmRNA), required for stable association of tmRNA with ribosomes. tmRNA and SmpB together mimic tRNA shape, replacing the anticodon stem-loop with SmpB. tmRNA is encoded by the ssrA gene; the 2 termini fold to resemble tRNA(Ala) and it encodes a 'tag peptide', a short internal open reading frame. During trans-translation Ala-aminoacylated tmRNA acts like a tRNA, entering the A-site of stalled ribosomes, displacing the stalled mRNA. The ribosome then switches to translate the ORF on the tmRNA; the nascent peptide is terminated with the 'tag peptide' encoded by the tmRNA and targeted for degradation. The ribosome is freed to recommence translation, which seems to be the essential function of trans-translation. This is SsrA-binding protein from Bifidobacterium adolescentis (strain ATCC 15703 / DSM 20083 / NCTC 11814 / E194a).